Consider the following 142-residue polypeptide: MNSKHSYVELKDKVIVPGWPTLMLEIDFVGGTSRNQFLNIPFLSVKEPLQLPREKKLTDYFTIDVEPAGHSLVNIYFQIDDFLLLTLNSLSVYKDPIRKYMFLRLNKDQSKHAINAAFNVFSYRLRNIGVGPLGPDIRSSGP.

In terms of assembly, homooligomer. Forms homotetramers. Interacts with phosphoprotein P. Binds to ssRNA.

Its subcellular location is the virion. The protein resides in the host cytoplasm. It localises to the host cell membrane. It is found in the host nucleus. Plays a crucial role in virion assembly and budding. In Borna disease virus (strain V) (BDV), this protein is Matrix protein (M).